An 833-amino-acid polypeptide reads, in one-letter code: Prickle-like protein 1 (833 aa).

The disordered stretch occupies residues 1–22 (MPLEMDQKISKHTFGCQRSSTS). In terms of domain architecture, PET spans 14–122 (FGCQRSSTSD…NIKMLSRAVM (109 aa)). 3 LIM zinc-binding domains span residues 124–188 (AMCE…ELLK), 189–249 (PRCS…HYAE), and 250–313 (YCES…EDVH). Disordered stretches follow at residues 312 to 346 (VHAS…ADQC), 432 to 456 (EDNR…RNSR), 603 to 702 (CQEK…ERNP), 767 to 786 (CSSS…QPIP), and 805 to 833 (NALS…CIIS). Basic and acidic residues-rich tracts occupy residues 432-453 (EDNR…DLQR) and 603-614 (CQEKPPPEEKPM). The span at 669-680 (RPHHHRRRKSRK) shows a compositional bias: basic residues. Residues 817–833 (TKSKKKKGHKGKNCIIS) are compositionally biased toward basic residues. A Cysteine methyl ester modification is found at C830. C830 is lipidated: S-farnesyl cysteine. Positions 831–833 (IIS) are cleaved as a propeptide — removed in mature form.

This sequence belongs to the prickle / espinas / testin family. Interacts with dvl2/dsh and mapk8/jnk1.

It localises to the cell membrane. Functionally, acts in a planar cell polarity (PCP) complex; polarization along the apical/basal axis of epithelial cells. Regulates the polarized assembly of fibronectrin on the surface of the mesoderm during gastrulation. Essential for gastrulation cell movements, cooperating with dvl2/dsh to activate jnk. Acts together with tes to control axial elongation. The polypeptide is Prickle-like protein 1 (Xenopus tropicalis (Western clawed frog)).